The sequence spans 413 residues: Multifunctional CCA protein (413 aa).

2 residues coordinate ATP: G8 and R11. The CTP site is built by G8 and R11. Mg(2+) is bound by residues D21 and D23. The ATP site is built by R91, R137, and R140. CTP contacts are provided by R91, R137, and R140. One can recognise an HD domain in the interval 228–329 (TGIHTLMVLA…LKVFDKADAW (102 aa)).

The protein belongs to the tRNA nucleotidyltransferase/poly(A) polymerase family. Bacterial CCA-adding enzyme type 1 subfamily. In terms of assembly, monomer. Can also form homodimers and oligomers. Mg(2+) is required as a cofactor. Requires Ni(2+) as cofactor.

It catalyses the reaction a tRNA precursor + 2 CTP + ATP = a tRNA with a 3' CCA end + 3 diphosphate. It carries out the reaction a tRNA with a 3' CCA end + 2 CTP + ATP = a tRNA with a 3' CCACCA end + 3 diphosphate. Functionally, catalyzes the addition and repair of the essential 3'-terminal CCA sequence in tRNAs without using a nucleic acid template. Adds these three nucleotides in the order of C, C, and A to the tRNA nucleotide-73, using CTP and ATP as substrates and producing inorganic pyrophosphate. tRNA 3'-terminal CCA addition is required both for tRNA processing and repair. Also involved in tRNA surveillance by mediating tandem CCA addition to generate a CCACCA at the 3' terminus of unstable tRNAs. While stable tRNAs receive only 3'-terminal CCA, unstable tRNAs are marked with CCACCA and rapidly degraded. The polypeptide is Multifunctional CCA protein (Aeromonas salmonicida (strain A449)).